The primary structure comprises 215 residues: Small ribosomal subunit protein uS3 (215 aa).

The region spanning 38–107 is the KH type-2 domain; it reads IRDYIKKTYH…KFQLNIEEVK (70 aa).

Belongs to the universal ribosomal protein uS3 family. As to quaternary structure, part of the 30S ribosomal subunit. Forms a tight complex with proteins S10 and S14.

Functionally, binds the lower part of the 30S subunit head. Binds mRNA in the 70S ribosome, positioning it for translation. This chain is Small ribosomal subunit protein uS3, found in Kosmotoga olearia (strain ATCC BAA-1733 / DSM 21960 / TBF 19.5.1).